Reading from the N-terminus, the 660-residue chain is MSAIESVMQEHRVFNPPEGFASQAAIPSMEAYQALCDEAERDYEGFWARHARELLHWTKPFTKVLDQSNAPFYKWFEDGELNASYNCLDRNLQNGNADKVAIVFEADDGSVTRVTYRELHGKVCRFANGLKALGIRKGDRVVIYMPMSVEGVVAMQACARLGATHSVVFGGFSAKSLQERLVDVGAVALITADEQMRGGKALPLKAIADDALALGGCEAVRNVIVYRRTGGKVAWTEGRDRWMEDVSAGQPDTCEAEPVSAEHPLFVLYTSGSTGKPKGVQHSTGGYLLWALMTMKWTFDIKPDDLFWCTADIGWVTGHTYIAYGPLAAGATQVVFEGVPTYPNAGRFWDMIARHKVSIFYTAPTAIRSLIKAAEADEKIHPKQYDLSSLRLLGTVGEPINPEAWMWYYKNIGNERCPIVDTFWQTETGGHMITPLPGATPLVPGSCTLPLPGIMAAIVDETGHDVPNGNGGILVVKRPWPAMIRTIWGDPERFRKSYFPEELGGKLYLAGDGSIRDKDTGYFTIMGRIDDVLNVSGHRMGTMEIESALVSNPLVAEAAVVGRPDDMTGEAICAFVVLKRSRPTGEEAVKIATELRNWVGKEIGPIAKPKDIRFGDNLPKTRSGKIMRRLLRSLAKGEEITQDTSTLENPAILEQLKQAQ.

CoA contacts are provided by residues 197–200 (RGGK) and T317. Residues 397–399 (GEP), 421–426 (DTFWQT), D512, and R528 contribute to the ATP site. Position 536 (S536) interacts with CoA. ATP is bound at residue R539. Residues V550 and V555 each coordinate Mg(2+). An N6-acetyllysine modification is found at K625.

Belongs to the ATP-dependent AMP-binding enzyme family. Mg(2+) is required as a cofactor. Post-translationally, acetylated. Deacetylation by the SIR2-homolog deacetylase activates the enzyme.

The enzyme catalyses acetate + ATP + CoA = acetyl-CoA + AMP + diphosphate. The protein operates within ketone degradation; acetoin degradation. Catalyzes the conversion of acetate into acetyl-CoA (AcCoA), an essential intermediate at the junction of anabolic and catabolic pathways. AcsA undergoes a two-step reaction. In the first half reaction, AcsA combines acetate with ATP to form acetyl-adenylate (AcAMP) intermediate. In the second half reaction, it can then transfer the acetyl group from AcAMP to the sulfhydryl group of CoA, forming the product AcCoA. Although acetate is the preferred substrate of AcsA, propionate is also used, but at a diminished rate compared with that of acetate. Fatty acids with more than three carbon atoms are usually not accepted as substrates by AcsA. The chain is Acetyl-coenzyme A synthetase from Cupriavidus necator (strain ATCC 17699 / DSM 428 / KCTC 22496 / NCIMB 10442 / H16 / Stanier 337) (Ralstonia eutropha).